The primary structure comprises 362 residues: UDP-N-acetylglucosamine--N-acetylmuramyl-(pentapeptide) pyrophosphoryl-undecaprenol N-acetylglucosamine transferase (362 aa).

UDP-N-acetyl-alpha-D-glucosamine-binding positions include 14–16, R170, S199, and Q289; that span reads TGG.

Belongs to the glycosyltransferase 28 family. MurG subfamily.

The protein localises to the cell inner membrane. It carries out the reaction di-trans,octa-cis-undecaprenyl diphospho-N-acetyl-alpha-D-muramoyl-L-alanyl-D-glutamyl-meso-2,6-diaminopimeloyl-D-alanyl-D-alanine + UDP-N-acetyl-alpha-D-glucosamine = di-trans,octa-cis-undecaprenyl diphospho-[N-acetyl-alpha-D-glucosaminyl-(1-&gt;4)]-N-acetyl-alpha-D-muramoyl-L-alanyl-D-glutamyl-meso-2,6-diaminopimeloyl-D-alanyl-D-alanine + UDP + H(+). Its pathway is cell wall biogenesis; peptidoglycan biosynthesis. Cell wall formation. Catalyzes the transfer of a GlcNAc subunit on undecaprenyl-pyrophosphoryl-MurNAc-pentapeptide (lipid intermediate I) to form undecaprenyl-pyrophosphoryl-MurNAc-(pentapeptide)GlcNAc (lipid intermediate II). The protein is UDP-N-acetylglucosamine--N-acetylmuramyl-(pentapeptide) pyrophosphoryl-undecaprenol N-acetylglucosamine transferase of Borrelia turicatae (strain 91E135).